The following is a 147-amino-acid chain: Small ribosomal subunit protein eS19 (147 aa).

Belongs to the eukaryotic ribosomal protein eS19 family. As to quaternary structure, part of the 30S ribosomal subunit.

In terms of biological role, may be involved in maturation of the 30S ribosomal subunit. In Archaeoglobus fulgidus (strain ATCC 49558 / DSM 4304 / JCM 9628 / NBRC 100126 / VC-16), this protein is Small ribosomal subunit protein eS19.